The primary structure comprises 3491 residues: Genome polyprotein (3491 aa).

The Fe2OG dioxygenase domain maps to 183 to 277; the sequence is KYNTALVQVY…RISITFRNQI (95 aa). 3 residues coordinate Fe cation: H201, D203, and H259. R268 is a binding site for 2-oxoglutarate. Positions 559 to 588 are disordered; sequence DSASDNDVETMKKSEKRRKRRKRNPPPVRQ. A compositionally biased stretch (basic residues) spans 572–582; that stretch reads SEKRRKRRKRN. One can recognise a Peptidase S30 domain in the interval 589–745; it reads VITRAPVSNI…DCLADDYLQY (157 aa). Active-site for P1 proteinase activity residues include H640, D651, and S692. Positions 948-1070 constitute a Peptidase C6 domain; sequence VHVPLEGLCF…RNGCQEYRVG (123 aa). Residues C956 and H1029 each act as for helper component proteinase activity in the active site. Residues 1540–1692 form the Helicase ATP-binding domain; sequence TLTSSVKREF…TMHPVEVVNM (153 aa). 1553–1560 serves as a coordination point for ATP; sequence GFVGSGKS. The DEAH box signature appears at 1642-1645; sequence DESH. Positions 1696–1869 constitute a Helicase C-terminal domain; it reads SFEDFAIGQR…NVPPIFDNVD (174 aa). O-(5'-phospho-RNA)-tyrosine is present on Y2238. Residues 2354–2570 enclose the Peptidase C4 domain; it reads GRSTIKSGNN…LDVGSNNAIR (217 aa). Active-site for nuclear inclusion protein A activity residues include H2400, D2435, and C2504. Positions 2850–2974 constitute a RdRp catalytic domain; sequence FVYGTGDGSQ…AIHPDRESIL (125 aa). Disordered regions lie at residues 3200–3279 and 3471–3491; these read MPQA…RKGL and RHTT…AMMA. Residues 3236 to 3248 show a composition bias toward basic and acidic residues; it reads RLSPERIVRHDDD. A Phosphothreonine modification is found at T3473.

Belongs to the potyviridae genome polyprotein family. Fe(2+) is required as a cofactor. Post-translationally, VPg is uridylylated by the polymerase and is covalently attached to the 5'-end of the genomic RNA. This uridylylated form acts as a nucleotide-peptide primer for the polymerase. Genome polyprotein of potyviruses undergoes post-translational proteolytic processing by the main proteinase NIa-pro resulting in the production of at least ten individual proteins. The P1 proteinase and the HC-pro cleave only their respective C-termini autocatalytically. 6K1 is essential for proper proteolytic separation of P3 from CI.

Its subcellular location is the host cytoplasmic vesicle. It localises to the virion. The catalysed reaction is RNA(n) + a ribonucleoside 5'-triphosphate = RNA(n+1) + diphosphate. It catalyses the reaction Hydrolyzes glutaminyl bonds, and activity is further restricted by preferences for the amino acids in P6 - P1' that vary with the species of potyvirus, e.g. Glu-Xaa-Xaa-Tyr-Xaa-Gln-|-(Ser or Gly) for the enzyme from tobacco etch virus. The natural substrate is the viral polyprotein, but other proteins and oligopeptides containing the appropriate consensus sequence are also cleaved.. It carries out the reaction Hydrolyzes a Gly-|-Gly bond at its own C-terminus, commonly in the sequence -Tyr-Xaa-Val-Gly-|-Gly, in the processing of the potyviral polyprotein.. Required for aphid transmission and also has proteolytic activity. Only cleaves a Gly-Gly dipeptide at its own C-terminus. Interacts with virions and aphid stylets. Acts as a suppressor of RNA-mediated gene silencing, also known as post-transcriptional gene silencing (PTGS), a mechanism of plant viral defense that limits the accumulation of viral RNAs. May have RNA-binding activity. Functionally, has helicase activity. It may be involved in replication. In terms of biological role, indispensable for virus replication. Reduces the abundance of host transcripts related to jasmonic acid biosynthesis therefore altering the host defenses. In order to increase its own stability, decreases host protein degradation pathways. Its function is as follows. Indispensable for virus replication. Mediates the cap-independent, EIF4E-dependent translation of viral genomic RNAs. Binds to the cap-binding site of host EIF4E and thus interferes with the host EIF4E-dependent mRNA export and translation. VPg-RNA directly binds EIF4E and is a template for transcription. Also forms trimeric complexes with EIF4E-EIF4G, which are templates for translation. Functionally, has RNA-binding and proteolytic activities. In terms of biological role, an RNA-dependent RNA polymerase that plays an essential role in the virus replication. Its function is as follows. Involved in aphid transmission, cell-to-cell and systemis movement, encapsidation of the viral RNA and in the regulation of viral RNA amplification. The protein is Genome polyprotein of Blackberry virus Y (isolate Blackberry plant/USA:Arkansas/C3ARK/2005) (BVY).